Here is a 456-residue protein sequence, read N- to C-terminus: Bifunctional protein GlmU (456 aa).

The tract at residues 1–228 (MPQNTLNIVI…SHLAAGVNNK (228 aa)) is pyrophosphorylase. UDP-N-acetyl-alpha-D-glucosamine-binding positions include 11 to 14 (LAAG), Lys25, Gln75, 80 to 81 (GT), 102 to 104 (YGD), Gly138, Glu153, Asn168, and Asn226. Asp104 contributes to the Mg(2+) binding site. Asn226 serves as a coordination point for Mg(2+). The linker stretch occupies residues 229–249 (LQLAELERIFQTEQAQELLKA). Positions 250–456 (GVTLRDPARF…GWVRPEKNKQ (207 aa)) are N-acetyltransferase. UDP-N-acetyl-alpha-D-glucosamine-binding residues include Arg332 and Lys350. The active-site Proton acceptor is His362. UDP-N-acetyl-alpha-D-glucosamine is bound by residues Tyr365 and Asn376. Acetyl-CoA-binding positions include Ala379, 385-386 (NY), Ser404, Ala422, and Arg439.

This sequence in the N-terminal section; belongs to the N-acetylglucosamine-1-phosphate uridyltransferase family. In the C-terminal section; belongs to the transferase hexapeptide repeat family. In terms of assembly, homotrimer. Mg(2+) serves as cofactor.

It localises to the cytoplasm. The catalysed reaction is alpha-D-glucosamine 1-phosphate + acetyl-CoA = N-acetyl-alpha-D-glucosamine 1-phosphate + CoA + H(+). It carries out the reaction N-acetyl-alpha-D-glucosamine 1-phosphate + UTP + H(+) = UDP-N-acetyl-alpha-D-glucosamine + diphosphate. It functions in the pathway nucleotide-sugar biosynthesis; UDP-N-acetyl-alpha-D-glucosamine biosynthesis; N-acetyl-alpha-D-glucosamine 1-phosphate from alpha-D-glucosamine 6-phosphate (route II): step 2/2. It participates in nucleotide-sugar biosynthesis; UDP-N-acetyl-alpha-D-glucosamine biosynthesis; UDP-N-acetyl-alpha-D-glucosamine from N-acetyl-alpha-D-glucosamine 1-phosphate: step 1/1. The protein operates within bacterial outer membrane biogenesis; LPS lipid A biosynthesis. Its function is as follows. Catalyzes the last two sequential reactions in the de novo biosynthetic pathway for UDP-N-acetylglucosamine (UDP-GlcNAc). The C-terminal domain catalyzes the transfer of acetyl group from acetyl coenzyme A to glucosamine-1-phosphate (GlcN-1-P) to produce N-acetylglucosamine-1-phosphate (GlcNAc-1-P), which is converted into UDP-GlcNAc by the transfer of uridine 5-monophosphate (from uridine 5-triphosphate), a reaction catalyzed by the N-terminal domain. In Neisseria meningitidis serogroup A / serotype 4A (strain DSM 15465 / Z2491), this protein is Bifunctional protein GlmU.